A 119-amino-acid chain; its full sequence is Large ribosomal subunit protein bL20 (119 aa).

The protein belongs to the bacterial ribosomal protein bL20 family.

In terms of biological role, binds directly to 23S ribosomal RNA and is necessary for the in vitro assembly process of the 50S ribosomal subunit. It is not involved in the protein synthesizing functions of that subunit. This chain is Large ribosomal subunit protein bL20, found in Rhodospirillum centenum (strain ATCC 51521 / SW).